The chain runs to 751 residues: Proton-associated sugar transporter A (751 aa).

6 helical membrane passes run 93–113, 123–143, 155–175, 191–211, 233–253, and 268–288; these read ILFG…PVLL, SLVW…LGAW, RPFI…LLNG, WGIL…DSAD, IHAL…GIHW, and VIYI…LVSI. The residue at position 500 (threonine 500) is a Phosphothreonine. A run of 6 helical transmembrane segments spans residues 536–556, 576–596, 606–626, 630–650, 688–708, and 710–730; these read GWLS…EVVF, VTMG…YSAI, VRTL…LATL, LYVV…LCTL, FLAQ…VGSA, and GVMY…SLCV.

It belongs to the glycoside-pentoside-hexuronide (GPH) cation symporter transporter (TC 2.A.2) family. Predominantly expressed in brain.

It is found in the membrane. It carries out the reaction D-galactose(in) + H(+)(in) = D-galactose(out) + H(+)(out). The catalysed reaction is D-glucose(out) + H(+)(out) = D-glucose(in) + H(+)(in). Proton-associated glucose transporter in the brain. The polypeptide is Proton-associated sugar transporter A (Rattus norvegicus (Rat)).